An 865-amino-acid polypeptide reads, in one-letter code: Alanine--tRNA ligase (865 aa).

The Zn(2+) site is built by His-554, His-558, Cys-656, and His-660.

It belongs to the class-II aminoacyl-tRNA synthetase family. It depends on Zn(2+) as a cofactor.

The protein resides in the cytoplasm. It catalyses the reaction tRNA(Ala) + L-alanine + ATP = L-alanyl-tRNA(Ala) + AMP + diphosphate. In terms of biological role, catalyzes the attachment of alanine to tRNA(Ala) in a two-step reaction: alanine is first activated by ATP to form Ala-AMP and then transferred to the acceptor end of tRNA(Ala). Also edits incorrectly charged Ser-tRNA(Ala) and Gly-tRNA(Ala) via its editing domain. The chain is Alanine--tRNA ligase from Francisella tularensis subsp. holarctica (strain LVS).